A 543-amino-acid chain; its full sequence is Terpineol synthase, chloroplastic (543 aa).

A disordered region spans residues 1 to 22 (MNTEPSPNHYSAISSSDQNLTR). Residues R263, D300, D304, R435, and N438 each coordinate (2E)-geranyl diphosphate. Residues D300 and D304 each coordinate Mg(2+). Residues 300-304 (DDVYD) carry the DDXXD motif motif. Mg(2+)-binding residues include N438, T442, and E446.

Belongs to the terpene synthase family. Tpsb subfamily. As to quaternary structure, monomer. Mg(2+) serves as cofactor. Requires Mn(2+) as cofactor. In terms of tissue distribution, confined to flowers.

Its subcellular location is the plastid. The protein resides in the chloroplast. The enzyme catalyses (2E)-geranyl diphosphate + H2O = (S)-alpha-terpineol + diphosphate. It carries out the reaction (2E)-geranyl diphosphate = sabinene + diphosphate. It catalyses the reaction (2E)-geranyl diphosphate = beta-myrcene + diphosphate. The catalysed reaction is (2E)-geranyl diphosphate = limonene + diphosphate. The enzyme catalyses (2E)-geranyl diphosphate + H2O = 1,8-cineole + diphosphate. It participates in secondary metabolite biosynthesis; terpenoid biosynthesis. Its function is as follows. Monoterpene synthase (TPS) involved in the biosynthesis of monoterpene natural products of the 'cineole cassette', volatile compounds present in floral scent. Catalyzes the conversion of (2E)-geranyl diphosphate (GPP) into alpha-terpineol and, as minor products, sabinene, beta-myrcene, limonene and 1,8-cineole. This Nicotiana alata (Winged tobacco) protein is Terpineol synthase, chloroplastic.